Here is a 226-residue protein sequence, read N- to C-terminus: 2-C-methyl-D-erythritol 4-phosphate cytidylyltransferase (226 aa).

This sequence belongs to the IspD/TarI cytidylyltransferase family. IspD subfamily.

The enzyme catalyses 2-C-methyl-D-erythritol 4-phosphate + CTP + H(+) = 4-CDP-2-C-methyl-D-erythritol + diphosphate. It participates in isoprenoid biosynthesis; isopentenyl diphosphate biosynthesis via DXP pathway; isopentenyl diphosphate from 1-deoxy-D-xylulose 5-phosphate: step 2/6. Its function is as follows. Catalyzes the formation of 4-diphosphocytidyl-2-C-methyl-D-erythritol from CTP and 2-C-methyl-D-erythritol 4-phosphate (MEP). The sequence is that of 2-C-methyl-D-erythritol 4-phosphate cytidylyltransferase from Thermosipho africanus (strain TCF52B).